We begin with the raw amino-acid sequence, 438 residues long: Probable glycine dehydrogenase (decarboxylating) subunit 1 (438 aa).

It belongs to the GcvP family. N-terminal subunit subfamily. In terms of assembly, the glycine cleavage system is composed of four proteins: P, T, L and H. In this organism, the P 'protein' is a heterodimer of two subunits.

It carries out the reaction N(6)-[(R)-lipoyl]-L-lysyl-[glycine-cleavage complex H protein] + glycine + H(+) = N(6)-[(R)-S(8)-aminomethyldihydrolipoyl]-L-lysyl-[glycine-cleavage complex H protein] + CO2. Its function is as follows. The glycine cleavage system catalyzes the degradation of glycine. The P protein binds the alpha-amino group of glycine through its pyridoxal phosphate cofactor; CO(2) is released and the remaining methylamine moiety is then transferred to the lipoamide cofactor of the H protein. The chain is Probable glycine dehydrogenase (decarboxylating) subunit 1 from Syntrophomonas wolfei subsp. wolfei (strain DSM 2245B / Goettingen).